We begin with the raw amino-acid sequence, 480 residues long: tRNA-2-methylthio-N(6)-dimethylallyladenosine synthase (480 aa).

The MTTase N-terminal domain occupies 31–151 (RGLHVITWGC…LPEMVARAAR (121 aa)). [4Fe-4S] cluster contacts are provided by C40, C76, C114, C192, C196, and C199. The 233-residue stretch at 178-410 (SPGGITSFLT…QALLRTQQDA (233 aa)) folds into the Radical SAM core domain. The 63-residue stretch at 413–475 (DGTVGHVVPV…TNSLSGTLVQ (63 aa)) folds into the TRAM domain.

The protein belongs to the methylthiotransferase family. MiaB subfamily. As to quaternary structure, monomer. The cofactor is [4Fe-4S] cluster.

It localises to the cytoplasm. It catalyses the reaction N(6)-dimethylallyladenosine(37) in tRNA + (sulfur carrier)-SH + AH2 + 2 S-adenosyl-L-methionine = 2-methylsulfanyl-N(6)-dimethylallyladenosine(37) in tRNA + (sulfur carrier)-H + 5'-deoxyadenosine + L-methionine + A + S-adenosyl-L-homocysteine + 2 H(+). Its function is as follows. Catalyzes the methylthiolation of N6-(dimethylallyl)adenosine (i(6)A), leading to the formation of 2-methylthio-N6-(dimethylallyl)adenosine (ms(2)i(6)A) at position 37 in tRNAs that read codons beginning with uridine. The protein is tRNA-2-methylthio-N(6)-dimethylallyladenosine synthase of Gluconacetobacter diazotrophicus (strain ATCC 49037 / DSM 5601 / CCUG 37298 / CIP 103539 / LMG 7603 / PAl5).